The chain runs to 275 residues: 3-methyl-2-oxobutanoate hydroxymethyltransferase (275 aa).

Residues Asp44 and Asp83 each coordinate Mg(2+). 3-methyl-2-oxobutanoate is bound by residues 44–45 (DS), Asp83, and Lys113. Glu115 serves as a coordination point for Mg(2+). The active-site Proton acceptor is Glu182.

The protein belongs to the PanB family. In terms of assembly, homodecamer; pentamer of dimers. Requires Mg(2+) as cofactor.

It is found in the cytoplasm. It catalyses the reaction 3-methyl-2-oxobutanoate + (6R)-5,10-methylene-5,6,7,8-tetrahydrofolate + H2O = 2-dehydropantoate + (6S)-5,6,7,8-tetrahydrofolate. It functions in the pathway cofactor biosynthesis; (R)-pantothenate biosynthesis; (R)-pantoate from 3-methyl-2-oxobutanoate: step 1/2. Its function is as follows. Catalyzes the reversible reaction in which hydroxymethyl group from 5,10-methylenetetrahydrofolate is transferred onto alpha-ketoisovalerate to form ketopantoate. The polypeptide is 3-methyl-2-oxobutanoate hydroxymethyltransferase (Clostridium botulinum (strain 657 / Type Ba4)).